The chain runs to 36 residues: Alpha-amylase inhibitor AI-3688 (36 aa).

An intrachain disulfide couples Cys-9 to Cys-25.

Inhibits mammalian alpha-amylases specifically but has no action on plant and microbial alpha-amylases. The sequence is that of Alpha-amylase inhibitor AI-3688 from Kitasatospora aureofaciens (Streptomyces aureofaciens).